Reading from the N-terminus, the 180-residue chain is Large ribosomal subunit protein uL5 (180 aa).

The protein belongs to the universal ribosomal protein uL5 family. As to quaternary structure, part of the 50S ribosomal subunit; part of the 5S rRNA/L5/L18/L25 subcomplex. Contacts the 5S rRNA and the P site tRNA. Forms a bridge to the 30S subunit in the 70S ribosome.

In terms of biological role, this is one of the proteins that bind and probably mediate the attachment of the 5S RNA into the large ribosomal subunit, where it forms part of the central protuberance. In the 70S ribosome it contacts protein S13 of the 30S subunit (bridge B1b), connecting the 2 subunits; this bridge is implicated in subunit movement. Contacts the P site tRNA; the 5S rRNA and some of its associated proteins might help stabilize positioning of ribosome-bound tRNAs. The polypeptide is Large ribosomal subunit protein uL5 (Lacticaseibacillus casei (strain BL23) (Lactobacillus casei)).